The sequence spans 224 residues: 7-cyano-7-deazaguanine synthase (224 aa).

An ATP-binding site is contributed by 8–18 (CSGGLDSTVAA). The Zn(2+) site is built by cysteine 190, cysteine 198, cysteine 201, and cysteine 204.

The protein belongs to the QueC family. The cofactor is Zn(2+).

It catalyses the reaction 7-carboxy-7-deazaguanine + NH4(+) + ATP = 7-cyano-7-deazaguanine + ADP + phosphate + H2O + H(+). It functions in the pathway purine metabolism; 7-cyano-7-deazaguanine biosynthesis. Catalyzes the ATP-dependent conversion of 7-carboxy-7-deazaguanine (CDG) to 7-cyano-7-deazaguanine (preQ(0)). This Methanothrix thermoacetophila (strain DSM 6194 / JCM 14653 / NBRC 101360 / PT) (Methanosaeta thermophila) protein is 7-cyano-7-deazaguanine synthase.